The chain runs to 184 residues: Probable sensory rhodopsin transducer (184 aa).

Helical transmembrane passes span 14-34 (TLGV…VNVY) and 52-72 (GLVS…TIIG). The 53-residue stretch at 73-125 (RERTAAVETLAAQARQIEQGELDVDLATNRTDDVGDIYRALAVLRDSEQLDRQ) folds into the HAMP domain.

The protein belongs to the methyl-accepting chemotaxis (MCP) protein family. In terms of assembly, interacts with Xop2/SRM.

It localises to the membrane. Functionally, the HtrM-Xop2/SRM complex may interact with CheB or CheR and modulate their availability to Sop1 or Sop2. This is Probable sensory rhodopsin transducer (htrM) from Haloarcula marismortui (strain ATCC 43049 / DSM 3752 / JCM 8966 / VKM B-1809) (Halobacterium marismortui).